The chain runs to 441 residues: Ribulose bisphosphate carboxylase large chain (441 aa).

N89 and T139 together coordinate substrate. Catalysis depends on K141, which acts as the Proton acceptor. Residue K143 coordinates substrate. Positions 167, 169, and 170 each coordinate Mg(2+). K167 carries the N6-carboxylysine modification. Catalysis depends on H260, which acts as the Proton acceptor. 3 residues coordinate substrate: R261, H293, and S345.

It belongs to the RuBisCO large chain family. Type I subfamily. As to quaternary structure, heterohexadecamer of 8 large chains and 8 small chains; disulfide-linked. The disulfide link is formed within the large subunit homodimers. Mg(2+) serves as cofactor. In terms of processing, the disulfide bond which can form in the large chain dimeric partners within the hexadecamer appears to be associated with oxidative stress and protein turnover.

The protein localises to the plastid. Its subcellular location is the chloroplast. The enzyme catalyses 2 (2R)-3-phosphoglycerate + 2 H(+) = D-ribulose 1,5-bisphosphate + CO2 + H2O. The catalysed reaction is D-ribulose 1,5-bisphosphate + O2 = 2-phosphoglycolate + (2R)-3-phosphoglycerate + 2 H(+). In terms of biological role, ruBisCO catalyzes two reactions: the carboxylation of D-ribulose 1,5-bisphosphate, the primary event in carbon dioxide fixation, as well as the oxidative fragmentation of the pentose substrate in the photorespiration process. Both reactions occur simultaneously and in competition at the same active site. This Polemonium reptans (Greek valerian) protein is Ribulose bisphosphate carboxylase large chain.